Consider the following 2968-residue polypeptide: Trinucleotide repeat-containing gene 18 protein (2968 aa).

Disordered regions lie at residues Met-1–Ala-24 and Gly-139–Arg-261. The span at Gly-139–Ser-150 shows a compositional bias: low complexity. Composition is skewed to basic and acidic residues over residues Gly-221–Ser-233 and Gln-243–Glu-260. Ser-263 carries the phosphoserine modification. The segment covering Gly-304–Glu-322 has biased composition (basic and acidic residues). Disordered regions lie at residues Gly-304 to Val-356 and Phe-381 to Gln-488. Positions Gly-327–Ala-351 are enriched in pro residues. Composition is skewed to basic and acidic residues over residues Arg-395–Gly-405, Pro-419–Ser-431, and Glu-464–Pro-479. Ser-611 carries the post-translational modification Phosphoserine. Disordered regions lie at residues Pro-612–His-679, Glu-941–Ala-1002, Pro-1019–Val-1055, Asp-1106–Pro-1190, Ser-1212–Thr-1236, Leu-1279–Pro-1306, Lys-1497–Tyr-1566, and Ser-1687–Ala-1855. A Glycyl lysine isopeptide (Lys-Gly) (interchain with G-Cter in SUMO2) cross-link involves residue Lys-620. Composition is skewed to basic and acidic residues over residues Leu-651–Ser-660 and Glu-941–Leu-955. Residues Leu-916–Lys-949 are a coiled coil. Low complexity-rich tracts occupy residues Ala-966–Ala-983 and Pro-1019–Pro-1031. Over residues Thr-1032–Pro-1043 the composition is skewed to pro residues. A compositionally biased stretch (basic and acidic residues) spans Thr-1046–Val-1055. Phosphoserine occurs at positions 1127 and 1136. The span at Glu-1142–Val-1162 shows a compositional bias: basic and acidic residues. Over residues Glu-1171 to Leu-1181 the composition is skewed to pro residues. Residues Leu-1481 to Glu-1516 adopt a coiled-coil conformation. Over residues Lys-1497 to Arg-1519 the composition is skewed to basic and acidic residues. Basic residues predominate over residues Ser-1520–His-1534. Position 1540 is a phosphoserine (Ser-1540). A compositionally biased stretch (low complexity) spans Gly-1549–Ser-1563. The segment covering Ser-1816–Ala-1842 has biased composition (acidic residues). A phosphoserine mark is found at Ser-1857 and Ser-1863. Disordered stretches follow at residues Tyr-1912–Ala-2148 and Leu-2295–Ser-2771. 2 stretches are compositionally biased toward basic and acidic residues: residues Ser-1957–Gly-1968 and Leu-1993–Leu-2004. Low complexity predominate over residues Ala-2007–Ser-2024. A compositionally biased stretch (basic and acidic residues) spans Pro-2034–Asp-2046. Residues Ala-2069–Ala-2085 are compositionally biased toward low complexity. Residues Lys-2093 to Gly-2103 show a composition bias toward basic and acidic residues. Position 2146 is a phosphothreonine (Thr-2146). Basic and acidic residues predominate over residues Thr-2307 to Asp-2316. A compositionally biased stretch (basic residues) spans Ala-2329–Ala-2338. Low complexity predominate over residues Glu-2365–Lys-2374. The span at Ser-2375–Ala-2384 shows a compositional bias: basic and acidic residues. Residues Arg-2390–Pro-2401 show a composition bias toward pro residues. The span at Pro-2411–Thr-2433 shows a compositional bias: low complexity. Composition is skewed to basic and acidic residues over residues Arg-2441–Gly-2468 and Ala-2477–Pro-2487. Low complexity-rich tracts occupy residues Ser-2559 to Glu-2580 and Ser-2603 to Ser-2671. Over residues Thr-2673–Ala-2685 the composition is skewed to acidic residues. The span at Ala-2723 to Pro-2736 shows a compositional bias: pro residues. Ser-2771 is modified (phosphoserine). Residues Glu-2817–Asp-2962 form the BAH domain.

The protein is Trinucleotide repeat-containing gene 18 protein of Homo sapiens (Human).